A 171-amino-acid chain; its full sequence is Cytochrome c oxidase subunit 5b-2, mitochondrial (171 aa).

Residues Met1–Ile54 constitute a mitochondrion transit peptide. Positions 121, 145, and 148 each coordinate Zn(2+).

The protein belongs to the cytochrome c oxidase subunit 5B (TC 3.D.4.11) family.

It is found in the mitochondrion inner membrane. This protein is one of the nuclear-coded polypeptide chains of cytochrome c oxidase, the terminal oxidase in mitochondrial electron transport. The sequence is that of Cytochrome c oxidase subunit 5b-2, mitochondrial (COX5B-2) from Arabidopsis thaliana (Mouse-ear cress).